The sequence spans 174 residues: UPF0316 protein lin1888 (174 aa).

A run of 3 helical transmembrane segments spans residues 4–24 (GIFI…IYTV), 36–56 (LAAL…SLVL), and 62–82 (IANV…GMKI).

Belongs to the UPF0316 family.

The protein localises to the cell membrane. In Listeria innocua serovar 6a (strain ATCC BAA-680 / CLIP 11262), this protein is UPF0316 protein lin1888.